Consider the following 503-residue polypeptide: Probable folate-biopterin transporter 6 (503 aa).

Helical transmembrane passes span 56-76 (SFVLGVVLVYGVNQGFSGSIF), 101-121 (LYYIPWVMRPIWGLFTDVFPI), 128-148 (PYFVVSGVLGLVSAIAIVVLG), 153-173 (ALALSCLLGVSAAMAIADVVI), 194-214 (LCMVCSSAGALVGYATSGVFV), 221-241 (GALGVLAFSPATIVILGFFIY), 281-301 (LYMFISLALNISTHEGHFYWY), 314-334 (FVGIIYAVGALASMFGVLIYH), 344-364 (NILFFAQLLYVFSGMLDLVFI), 369-389 (LTLGIPDSLFVITEESFTKMI), 404-424 (LCPLGIEGTFFAFLMCIDSFG), and 450-470 (WLVILIRNILRLVTVCFVFLV).

It belongs to the major facilitator superfamily. Folate-biopterin transporter (TC 2.A.71) family.

It is found in the membrane. Its function is as follows. Could mediate folate transport. This is Probable folate-biopterin transporter 6 from Arabidopsis thaliana (Mouse-ear cress).